We begin with the raw amino-acid sequence, 184 residues long: Ras-related protein RabN2 (184 aa).

Residue 3–10 (GDYRSGKT) participates in GTP binding. The Effector region signature appears at 25 to 32 (TNPSTFDY). GTP is bound by residues 50 to 54 (DTAGH) and 117 to 120 (TKSD).

It belongs to the small GTPase superfamily. Rab family.

The polypeptide is Ras-related protein RabN2 (rabN2) (Dictyostelium discoideum (Social amoeba)).